A 504-amino-acid polypeptide reads, in one-letter code: D-alanine--D-alanyl carrier protein ligase (504 aa).

Residue 152–153 coordinates ATP; that stretch reads TS. Aspartate 197 contributes to the D-alanine binding site. Position 292-297 (292-297) interacts with ATP; sequence NTYGPT. D-alanine is bound at residue valine 301. ATP contacts are provided by residues aspartate 383, 394 to 397, and lysine 492; that span reads YNGR. Residue lysine 492 coordinates D-alanine.

It belongs to the ATP-dependent AMP-binding enzyme family. DltA subfamily.

The protein localises to the cytoplasm. It catalyses the reaction holo-[D-alanyl-carrier protein] + D-alanine + ATP = D-alanyl-[D-alanyl-carrier protein] + AMP + diphosphate. Its pathway is cell wall biogenesis; lipoteichoic acid biosynthesis. Functionally, catalyzes the first step in the D-alanylation of lipoteichoic acid (LTA), the activation of D-alanine and its transfer onto the D-alanyl carrier protein (Dcp) DltC. In an ATP-dependent two-step reaction, forms a high energy D-alanyl-AMP intermediate, followed by transfer of the D-alanyl residue as a thiol ester to the phosphopantheinyl prosthetic group of the Dcp. D-alanylation of LTA plays an important role in modulating the properties of the cell wall in Gram-positive bacteria, influencing the net charge of the cell wall. This chain is D-alanine--D-alanyl carrier protein ligase, found in Bacillus cereus (strain AH187).